Reading from the N-terminus, the 134-residue chain is Arsenate reductase (134 aa).

Catalysis depends on nucleophile residues C11, C83, and C90. Intrachain disulfides connect C11–C83 and C83–C90.

Belongs to the low molecular weight phosphotyrosine protein phosphatase family. Thioredoxin-coupled ArsC subfamily.

The protein resides in the cytoplasm. The enzyme catalyses arsenate + [thioredoxin]-dithiol + H(+) = arsenite + [thioredoxin]-disulfide + H2O. Functionally, catalyzes the reduction of arsenate [As(V)] to arsenite [As(III)]. In Bacillus cereus (strain ATCC 14579 / DSM 31 / CCUG 7414 / JCM 2152 / NBRC 15305 / NCIMB 9373 / NCTC 2599 / NRRL B-3711), this protein is Arsenate reductase.